The sequence spans 175 residues: Co-chaperone protein HscB homolog (175 aa).

Positions 2–76 (NYFALFNLTP…RAEHMLELRG (75 aa)) constitute a J domain.

The protein belongs to the HscB family. Interacts with HscA and stimulates its ATPase activity.

Co-chaperone involved in the maturation of iron-sulfur cluster-containing proteins. Seems to help targeting proteins to be folded toward HscA. This is Co-chaperone protein HscB homolog from Pseudoalteromonas atlantica (strain T6c / ATCC BAA-1087).